Reading from the N-terminus, the 366-residue chain is Ferredoxin--NADP reductase (366 aa).

D51, Q59, Y64, V104, F139, D308, and T349 together coordinate FAD.

The protein belongs to the ferredoxin--NADP reductase type 2 family. In terms of assembly, homodimer. Requires FAD as cofactor.

The catalysed reaction is 2 reduced [2Fe-2S]-[ferredoxin] + NADP(+) + H(+) = 2 oxidized [2Fe-2S]-[ferredoxin] + NADPH. This is Ferredoxin--NADP reductase from Polaromonas sp. (strain JS666 / ATCC BAA-500).